A 711-amino-acid polypeptide reads, in one-letter code: C6 finger domain transcription factor nscR (711 aa).

A DNA-binding region (zn(2)-C6 fungal-type) is located at residues 17–43 (CELCRERKVKCDKLDPCTNCSSAGVIC). Residues 372–394 (SPPKHINDSDFDPTTSHDVPDRE) are disordered.

It is found in the nucleus. Functionally, transcription factor that specifically regulates the neosartoricin B biosynthesis gene cluster. The polypeptide is C6 finger domain transcription factor nscR (Trichophyton tonsurans (strain CBS 112818) (Scalp ringworm fungus)).